A 35-amino-acid chain; its full sequence is Sperm protamine alpha isoform 2 (35 aa).

The segment at 1 to 35 (MPRRRRRASRPIRRRRRARRSTAVRRRRRVVRRRR) is disordered. Residues Ser-9 and Ser-21 each carry the phosphoserine modification.

Phosphorylated in immature sperm. Dephosphorylated in mature sperm allowing a stronger interaction with DNA. Gonads.

The protein localises to the nucleus. It localises to the chromosome. In terms of biological role, protamines substitute for histones in the chromatin of sperm during the haploid phase of spermatogenesis. They compact sperm DNA into a highly condensed, stable and inactive complex. The sequence is that of Sperm protamine alpha isoform 2 from Scomber scombrus (Atlantic mackerel).